Here is a 253-residue protein sequence, read N- to C-terminus: Triosephosphate isomerase, cytosolic (253 aa).

2 residues coordinate substrate: Asn10 and Lys12. His96 functions as the Electrophile in the catalytic mechanism. Glu166 (proton acceptor) is an active-site residue.

This sequence belongs to the triosephosphate isomerase family. Homodimer.

Its subcellular location is the cytoplasm. It catalyses the reaction D-glyceraldehyde 3-phosphate = dihydroxyacetone phosphate. The protein operates within carbohydrate biosynthesis; gluconeogenesis. It participates in carbohydrate degradation; glycolysis; D-glyceraldehyde 3-phosphate from glycerone phosphate: step 1/1. In Coptis japonica (Japanese goldthread), this protein is Triosephosphate isomerase, cytosolic.